Here is a 521-residue protein sequence, read N- to C-terminus: Lymphocyte activation gene 3 protein (521 aa).

The N-terminal stretch at 1-23 (MREDLLLGFLLLGLLWEAPVVSS) is a signal peptide. Residues 24 to 442 (GPGKELPVVW…ISGDLKGGHL (419 aa)) lie on the Extracellular side of the membrane. An Ig-like V-type domain is found at 37–163 (GAPVHLPCSL…LSCSLRLRVG (127 aa)). The segment at 37–246 (GAPVHLPCSL…LTYRDGFNVS (210 aa)) is interaction with FGL1. C44 and C156 are oxidised to a cystine. 3 consecutive Ig-like C2-type domains span residues 165–246 (ASMI…FNVS), 258–341 (PVAP…ATVT), and 345–412 (ITVT…EGQR). N-linked (GlcNAc...) asparagine glycosylation occurs at N184. C185 and C235 are disulfide-bonded. N244, N309, N337, and N381 each carry an N-linked (GlcNAc...) asparagine glycan. A disulfide bridge links C276 with C327. C363 and C405 are joined by a disulfide. Positions 422 to 442 (ESSSGAHSARRISGDLKGGHL) are connecting peptide. A helical transmembrane segment spans residues 443–463 (VLVLILGALSLFLLVAGAFGF). The Cytoplasmic segment spans residues 464–521 (HWWRKQLLLRRFSALEHGIQPFPAQRKIEELERELETEMGQEPEPEPEPQLEPEPRQL). The short motif at 490–495 (KIEELE) is the KIEELE motif element. The segment at 493-518 (ELERELETEMGQEPEPEPEPQLEPEP) is 13 X 2 AA tandem repeats of E-X. Residues 493 to 521 (ELERELETEMGQEPEPEPEPQLEPEPRQL) form a disordered region. Over residues 500–514 (TEMGQEPEPEPEPQL) the composition is skewed to acidic residues.

It belongs to the LAG3 family. In terms of assembly, interacts with MHC class II (MHC-II); selectively recognizes stable complexes of peptide and MHC-II. Interacts with FGL1 (via the Fibrinogen C-terminal domain). Post-translationally, proteolytically cleaved by ADAM10 and ADAM17 within the connecting peptide region, leading to release of Secreted lymphocyte activation gene 3 protein (sLAG-3). ADAM10 mediates constitutive cleavage, but cleavage increases following T-cell activation, whereas shedding by ADAM17 is induced by TCR signaling in a PRKCQ-dependent manner. Primarily expressed in activated CD4(+) and CD8(+) T-cells. Also expressed in a subset of regulatory T-cells (Tregs), such as natural CD4(+)CD25(+) Tregs. Also expressed on plasmacytoid dendritic cells (pDCs).

It localises to the cell membrane. It is found in the secreted. Its function is as follows. Lymphocyte activation gene 3 protein: Inhibitory receptor on antigen activated T-cells. Delivers inhibitory signals upon binding to ligands, such as FGL1. FGL1 constitutes a major ligand of LAG3 and is responsible for LAG3 T-cell inhibitory function. Following TCR engagement, LAG3 associates with CD3-TCR in the immunological synapse and directly inhibits T-cell activation. May inhibit antigen-specific T-cell activation in synergy with PDCD1/PD-1, possibly by acting as a coreceptor for PDCD1/PD-1. Negatively regulates the proliferation, activation, effector function and homeostasis of both CD8(+) and CD4(+) T-cells. Also mediates immune tolerance: constitutively expressed on a subset of regulatory T-cells (Tregs) and contributes to their suppressive function. Also acts as a negative regulator of plasmacytoid dendritic cell (pDCs) activation. Binds MHC class II (MHC-II); the precise role of MHC-II-binding is however unclear. Functionally, may function as a ligand for MHC class II (MHC-II) on antigen-presenting cells (APC), promoting APC activation/maturation and driving Th1 immune response. This is Lymphocyte activation gene 3 protein from Mus musculus (Mouse).